The chain runs to 693 residues: MRQVCSFKREFAGKELKIDIGKVAWQATGAALVQYGETTVLVTVVASEDKKEDVDFFPLTVEYVERLYAAGKIPGGFFKREGKPTEPEILFARLIDRPLRPLFAKDFRNEVQVIVTVLSYDHENSTDIPSIIGASCAIILAGLPFKGPIGAVRIGWDGNEWYINPPVTLSNSLLLDLVVAGTKDAVLMIEGDGKEVPEDIFLEGIIKAHSAMLDVINFQEEILSQINPAPFNYDPFVVDERLKRAVLDYVTVDQIRDAIFTPSKSERQKALEDLKKKVIEHFKPIYGEITAQVDEIINQEAKKILSQVVLEEKRRVDGRKLNEIRPVSCEVGVLKRVHGSALFQRGETQVLSVVTLGAGEEQIIESVIESEPKRYIHHYNFPPFSVGEAKPLRGPKRREIGHGALAERALLPLIPKEEEFPYTIRVVSEVLSSNGSTSMASVCGSSLSLMDAGVPIKTHVAGVAMGLIKEGDRFEVLTDIQGLEDALGGMDFKIAGTRNGITAVQLDIKVDGLSYEIIERTLKQAKEARYQILDIMEKTIPQPRPEISPYAPRIMVLEINPSKIGDLIGPSGKNIKKIIEETHTTINIKPEGLVYISAPDQESAEKAAQMVQDYTRDIKEGDIFLGKVIRVTDYGAFVEILPGKIGLLHISKYKTTGTGKNQTREEINLGDEILIKVDSIDSSGRISLTRKDL.

Positions 485 and 491 each coordinate Mg(2+). A KH domain is found at Pro552–Val611. Positions Gly621 to Lys691 constitute an S1 motif domain.

It belongs to the polyribonucleotide nucleotidyltransferase family. It depends on Mg(2+) as a cofactor.

Its subcellular location is the cytoplasm. It catalyses the reaction RNA(n+1) + phosphate = RNA(n) + a ribonucleoside 5'-diphosphate. Its function is as follows. Involved in mRNA degradation. Catalyzes the phosphorolysis of single-stranded polyribonucleotides processively in the 3'- to 5'-direction. This chain is Polyribonucleotide nucleotidyltransferase, found in Dictyoglomus thermophilum (strain ATCC 35947 / DSM 3960 / H-6-12).